A 244-amino-acid chain; its full sequence is Small ribosomal subunit protein uS3 (244 aa).

The KH type-2 domain occupies Val39–Arg107. Positions Val213–Arg244 are disordered. Residues Glu216 to Arg244 are compositionally biased toward basic and acidic residues.

The protein belongs to the universal ribosomal protein uS3 family. As to quaternary structure, part of the 30S ribosomal subunit. Forms a tight complex with proteins S10 and S14.

Binds the lower part of the 30S subunit head. Binds mRNA in the 70S ribosome, positioning it for translation. This chain is Small ribosomal subunit protein uS3, found in Xanthomonas axonopodis pv. citri (strain 306).